A 191-amino-acid chain; its full sequence is Ribonuclease HII (191 aa).

In terms of domain architecture, RNase H type-2 spans 4-191 (YTAAGLDEVG…HRKTFLSKIQ (188 aa)). Positions 10, 11, and 106 each coordinate a divalent metal cation.

This sequence belongs to the RNase HII family. Mn(2+) is required as a cofactor. Requires Mg(2+) as cofactor.

It localises to the cytoplasm. It carries out the reaction Endonucleolytic cleavage to 5'-phosphomonoester.. Its function is as follows. Endonuclease that specifically degrades the RNA of RNA-DNA hybrids. The sequence is that of Ribonuclease HII from Prochlorococcus marinus (strain SARG / CCMP1375 / SS120).